We begin with the raw amino-acid sequence, 436 residues long: Adenylosuccinate synthetase (436 aa).

GTP contacts are provided by residues 12-18 and 40-42; these read GDEGKGK and GHT. Catalysis depends on aspartate 13, which acts as the Proton acceptor. Mg(2+) is bound by residues aspartate 13 and glycine 40. IMP contacts are provided by residues 13–16, 38–41, threonine 130, arginine 144, glutamine 230, threonine 245, and arginine 309; these read DEGK and NAGH. Histidine 41 functions as the Proton donor in the catalytic mechanism. Position 305–311 (305–311) interacts with substrate; it reads TTTGRPR. GTP contacts are provided by residues arginine 311, 337 to 339, and 419 to 421; these read KLD and SVG.

Belongs to the adenylosuccinate synthetase family. In terms of assembly, homodimer. Mg(2+) is required as a cofactor.

It localises to the cytoplasm. The enzyme catalyses IMP + L-aspartate + GTP = N(6)-(1,2-dicarboxyethyl)-AMP + GDP + phosphate + 2 H(+). It participates in purine metabolism; AMP biosynthesis via de novo pathway; AMP from IMP: step 1/2. Plays an important role in the de novo pathway of purine nucleotide biosynthesis. Catalyzes the first committed step in the biosynthesis of AMP from IMP. The polypeptide is Adenylosuccinate synthetase (Myxococcus xanthus (strain DK1622)).